The primary structure comprises 664 residues: Macoilin (664 aa).

4 helical membrane-spanning segments follow: residues 28–48 (TFLYLKFLVVWALVLLADFVL), 75–95 (AFSVFFVCVAFTSNIICLLFI), 120–140 (VCLPTVSLWILFVYIEAAIRF), and 154–174 (FAAHCIGYPVVTLGFGFKSYV). Basic and acidic residues predominate over residues 253-265 (REKGKEKDKDAKK). Positions 253 to 274 (REKGKEKDKDAKKHNLGINNNN) are disordered. Residue Ser305 is modified to Phosphoserine. The segment covering 320 to 348 (KNYKNASGVVNSSPRSHSATNGSIPSSSS) has biased composition (polar residues). The segment at 320–367 (KNYKNASGVVNSSPRSHSATNGSIPSSSSKNEKKQKCTSKSPSAHKDL) is disordered. Asn324 carries an N-linked (GlcNAc...) asparagine glycan. Ser332 carries the phosphoserine modification. Asn340 and Asn452 each carry an N-linked (GlcNAc...) asparagine glycan. The tract at residues 630–664 (TSPLSPVSPHYSSKFVETSPSGLDPNASVYQPLKK) is disordered. Ser631 and Ser634 each carry phosphoserine. A glycan (N-linked (GlcNAc...) asparagine) is linked at Asn655.

This sequence belongs to the macoilin family.

It is found in the rough endoplasmic reticulum membrane. It localises to the nucleus membrane. Its function is as follows. Plays a role in the regulation of neuronal activity. The sequence is that of Macoilin (MACO1) from Sus scrofa (Pig).